Reading from the N-terminus, the 304-residue chain is Probable endonuclease 4 (304 aa).

Zn(2+) is bound by residues H75, H115, E151, D185, H188, H221, D234, H236, and E266.

It belongs to the AP endonuclease 2 family. Zn(2+) is required as a cofactor.

The enzyme catalyses Endonucleolytic cleavage to 5'-phosphooligonucleotide end-products.. In terms of biological role, endonuclease IV plays a role in DNA repair. It cleaves phosphodiester bonds at apurinic or apyrimidinic (AP) sites, generating a 3'-hydroxyl group and a 5'-terminal sugar phosphate. This chain is Probable endonuclease 4, found in Ureaplasma urealyticum serovar 10 (strain ATCC 33699 / Western).